Reading from the N-terminus, the 89-residue chain is Cell division topological specificity factor (89 aa).

It belongs to the MinE family.

Prevents the cell division inhibition by proteins MinC and MinD at internal division sites while permitting inhibition at polar sites. This ensures cell division at the proper site by restricting the formation of a division septum at the midpoint of the long axis of the cell. This chain is Cell division topological specificity factor, found in Klebsiella pneumoniae (strain 342).